Consider the following 32-residue polypeptide: Ferredoxin (32 aa).

In terms of domain architecture, 2Fe-2S ferredoxin-type spans Y3–E32.

It belongs to the 2Fe2S plant-type ferredoxin family. It depends on [2Fe-2S] cluster as a cofactor.

The protein localises to the plastid. It is found in the chloroplast. Ferredoxins are iron-sulfur proteins that transfer electrons in a wide variety of metabolic reactions. This chain is Ferredoxin, found in Porphyridium purpureum (Red alga).